Reading from the N-terminus, the 80-residue chain is Gamma-conotoxin-like Am6.6 (80 aa).

The first 19 residues, 1-19, serve as a signal peptide directing secretion; sequence MEKLTILLLVAAILMSTQA. Positions 20 to 45 are excised as a propeptide; that stretch reads LNQEQRQQAKINLLSKKKPSAERWRR. 3 cysteine pairs are disulfide-bonded: Cys47–Cys61, Cys54–Cys65, and Cys60–Cys70. 4-carboxyglutamate occurs at positions 56 and 59. Glu71 bears the 4-carboxyglutamate mark. The residue at position 76 (Pro76) is a 4-hydroxyproline. Positions 78–80 are excised as a propeptide; it reads RAI.

This sequence belongs to the conotoxin O2 family. In terms of tissue distribution, expressed by the venom duct.

Its subcellular location is the secreted. Its function is as follows. Gamma-conotoxins may act on voltage-gated non-specific cation pacemaker channels (HCN). This is Gamma-conotoxin-like Am6.6 from Conus amadis (Amadis cone).